Here is a 747-residue protein sequence, read N- to C-terminus: Polyribonucleotide nucleotidyltransferase (747 aa).

Mg(2+) is bound by residues Asp-487 and Asp-493. Positions 554-613 (PSTTTIKIDKDKIRDIIGPGGKVIKEICETSGAKIDISDDGSVSVYASDRDKLKVALDKI) constitute a KH domain. An S1 motif domain is found at 623 to 691 (GEIFNGTVMK…NKGKAKLTIK (69 aa)). Residues 691 to 747 (KNADKDKSSNNPKPKNNVNNAKENSEPERRDSSKKRAWNEDSNNDKEEAITERKYFN) form a disordered region. Over residues 699-712 (SNNPKPKNNVNNAK) the composition is skewed to low complexity. Over residues 727–747 (AWNEDSNNDKEEAITERKYFN) the composition is skewed to basic and acidic residues.

This sequence belongs to the polyribonucleotide nucleotidyltransferase family. The cofactor is Mg(2+).

It is found in the cytoplasm. The catalysed reaction is RNA(n+1) + phosphate = RNA(n) + a ribonucleoside 5'-diphosphate. In terms of biological role, involved in mRNA degradation. Catalyzes the phosphorolysis of single-stranded polyribonucleotides processively in the 3'- to 5'-direction. This chain is Polyribonucleotide nucleotidyltransferase, found in Rickettsia felis (strain ATCC VR-1525 / URRWXCal2) (Rickettsia azadi).